The chain runs to 190 residues: Nucleoside triphosphate pyrophosphatase (190 aa).

Residue aspartate 69 is the Proton acceptor of the active site.

This sequence belongs to the Maf family. A divalent metal cation is required as a cofactor.

The protein resides in the cytoplasm. The enzyme catalyses a ribonucleoside 5'-triphosphate + H2O = a ribonucleoside 5'-phosphate + diphosphate + H(+). The catalysed reaction is a 2'-deoxyribonucleoside 5'-triphosphate + H2O = a 2'-deoxyribonucleoside 5'-phosphate + diphosphate + H(+). Nucleoside triphosphate pyrophosphatase. May have a dual role in cell division arrest and in preventing the incorporation of modified nucleotides into cellular nucleic acids. The sequence is that of Nucleoside triphosphate pyrophosphatase from Helicobacter pylori (strain ATCC 700392 / 26695) (Campylobacter pylori).